Consider the following 374-residue polypeptide: Alanine racemase (374 aa).

Residue lysine 44 is the Proton acceptor; specific for D-alanine of the active site. Lysine 44 is modified (N6-(pyridoxal phosphate)lysine). Arginine 139 contacts substrate. Tyrosine 269 (proton acceptor; specific for L-alanine) is an active-site residue. Methionine 317 provides a ligand contact to substrate.

It belongs to the alanine racemase family. Pyridoxal 5'-phosphate is required as a cofactor.

It catalyses the reaction L-alanine = D-alanine. It functions in the pathway amino-acid biosynthesis; D-alanine biosynthesis; D-alanine from L-alanine: step 1/1. Its function is as follows. Catalyzes the interconversion of L-alanine and D-alanine. May also act on other amino acids. This chain is Alanine racemase (alr), found in Bordetella avium (strain 197N).